We begin with the raw amino-acid sequence, 467 residues long: Methylenetetrahydrofolate--tRNA-(uracil-5-)-methyltransferase TrmFO (467 aa).

11–16 (GAGLAG) contributes to the FAD binding site.

This sequence belongs to the MnmG family. TrmFO subfamily. FAD is required as a cofactor.

The protein resides in the cytoplasm. It carries out the reaction uridine(54) in tRNA + (6R)-5,10-methylene-5,6,7,8-tetrahydrofolate + NADH + H(+) = 5-methyluridine(54) in tRNA + (6S)-5,6,7,8-tetrahydrofolate + NAD(+). It catalyses the reaction uridine(54) in tRNA + (6R)-5,10-methylene-5,6,7,8-tetrahydrofolate + NADPH + H(+) = 5-methyluridine(54) in tRNA + (6S)-5,6,7,8-tetrahydrofolate + NADP(+). Functionally, catalyzes the folate-dependent formation of 5-methyl-uridine at position 54 (M-5-U54) in all tRNAs. The protein is Methylenetetrahydrofolate--tRNA-(uracil-5-)-methyltransferase TrmFO of Prochlorococcus marinus (strain NATL2A).